A 137-amino-acid polypeptide reads, in one-letter code: Large ribosomal subunit protein uL16 (137 aa).

The protein belongs to the universal ribosomal protein uL16 family. Part of the 50S ribosomal subunit.

In terms of biological role, binds 23S rRNA and is also seen to make contacts with the A and possibly P site tRNAs. In Xylella fastidiosa (strain M23), this protein is Large ribosomal subunit protein uL16.